The chain runs to 364 residues: Alanine racemase (364 aa).

Lys34 functions as the Proton acceptor; specific for D-alanine in the catalytic mechanism. Position 34 is an N6-(pyridoxal phosphate)lysine (Lys34). Arg129 lines the substrate pocket. The Proton acceptor; specific for L-alanine role is filled by Tyr259. Met307 is a binding site for substrate.

The protein belongs to the alanine racemase family. It depends on pyridoxal 5'-phosphate as a cofactor.

It carries out the reaction L-alanine = D-alanine. It functions in the pathway amino-acid biosynthesis; D-alanine biosynthesis; D-alanine from L-alanine: step 1/1. Catalyzes the interconversion of L-alanine and D-alanine. May also act on other amino acids. The protein is Alanine racemase (alr) of Coxiella burnetii (strain CbuK_Q154) (Coxiella burnetii (strain Q154)).